We begin with the raw amino-acid sequence, 445 residues long: Putrescine hydroxycinnamoyltransferase 1 (445 aa).

Active-site proton acceptor residues include His154 and Asp388.

Belongs to the plant acyltransferase family. As to expression, expressed in leaves.

Its function is as follows. Hydroxycinnamoyl transferase that catalyzes the transfer of an acyl from p-coumaryol-CoA to putrescine, to produce coumaroyl putrescine. In Oryza sativa subsp. japonica (Rice), this protein is Putrescine hydroxycinnamoyltransferase 1.